The sequence spans 549 residues: Glucose-6-phosphate isomerase (549 aa).

Catalysis depends on glutamate 355, which acts as the Proton donor. Active-site residues include histidine 386 and lysine 514.

Belongs to the GPI family.

It localises to the cytoplasm. It catalyses the reaction alpha-D-glucose 6-phosphate = beta-D-fructose 6-phosphate. Its pathway is carbohydrate biosynthesis; gluconeogenesis. It functions in the pathway carbohydrate degradation; glycolysis; D-glyceraldehyde 3-phosphate and glycerone phosphate from D-glucose: step 2/4. Its function is as follows. Catalyzes the reversible isomerization of glucose-6-phosphate to fructose-6-phosphate. This chain is Glucose-6-phosphate isomerase, found in Buchnera aphidicola subsp. Acyrthosiphon pisum (strain 5A).